Reading from the N-terminus, the 356-residue chain is Glucan endo-1,3-beta-glucosidase, acidic isoform GL153 (356 aa).

The signal sequence occupies residues 1–29; that stretch reads MALCIKNGFLAAALVLVGLLMCSIQMIGA. Glutamine 30 bears the Pyrrolidone carboxylic acid mark. Asparagine 95 is a glycosylation site (N-linked (GlcNAc...) asparagine). Catalysis depends on glutamate 124, which acts as the Proton donor. The active-site Nucleophile is glutamate 264.

Belongs to the glycosyl hydrolase 17 family. As to expression, is expressed primarily in epidermal cell of healthy plant, and following induction by ethylene, accumulates in mesophyll cells.

Its subcellular location is the secreted. It localises to the extracellular space. The catalysed reaction is Hydrolysis of (1-&gt;3)-beta-D-glucosidic linkages in (1-&gt;3)-beta-D-glucans.. Is thought to be an important plant defense-related product against fungal pathogens. In Nicotiana tabacum (Common tobacco), this protein is Glucan endo-1,3-beta-glucosidase, acidic isoform GL153 (GGL4).